Here is a 1525-residue protein sequence, read N- to C-terminus: MSSWLPQNVQKRLLIYLLQQISIFSQIDTTNLDVSLGCRSQFAFHDVELNVDHMRVPHITVESGHISELELGLVVSGGLDITGDGLCFVVRPELSEVAGSHDLAQSLARSIMDLTNSMMQPLPEVLEGDEVLANSCSEAGDAQQPASSSALDKMRNKVLERALSNLTVRIINVRIQVLFPGQQSITVLVGSVELSTVDKTRRVDLQDICISHSELVPSPEQPDEFMSTSASNSIYMSAIDSLPFGSRSKMEENARNVRALLQMDKLHVTFQGISSVEDISIRDLMLHMGRVDVFLDAIIAVDIGVFEVLVQFVAEFQQDTEVSETSNTLQNYKRFRQEQNLEEDLQITGFTIEELRITLSQSVKVSVIDIQLRNRYIENSTVTVGRVTICDYDLDLLHIDAGSKPCLELTVDSRKLQRIISVDGDIHMDISSTFVSSLIPLIFRLQELGRGLHFVGTNNCKMSQEFKTQVETKTIILSLPVGDDTLQMIIQPISYELSLHTVFTDFISISKVQSSETRDIAIIREIKIGYQTANFQVKSYNLKLSETLLTSKLRGSVSSVELYCSDSDIKWLFDGLSPYQDMITPYMHSKPEVRKPIMNKSVRILSASSVIHRQNVFSDMVLLIERITCSLSADSISSFGNVKTELNSSLLSLNTDNSIIFHSSCVKGSTVFSDVKYCLFEPIKTKDVTKPALFVQRFENGKLKVNVQNTCIYYHAKWLDILDESKGTKSTPQQESAVPVPLQQRIEVKFHDCALSMHPYRLKSALLICVNRCILDISVPPANFKCIIRSPTFMLADDCSNMKTSITESWESLVRYYSKAGFAVIGKSGLLSCTIKQSGGQICLDIDVDRIDLSICADSFQCLIQTLIDIKPPVSFPDEKKYRTEPCSIPVFENVDDEFFVPKGTSNLPALNDMHIVDDFINNSNNSFSEVQVIEETEEGSPLKLEDNGLLFDEGHFNKEDIPVATDSKFFPFGPVAIVLHLFVRKASIKLHDGYDWVYTRRSISKVVDDLEDEVHKQDQPGRVETSLFDSIYLYATPDSNIKKAVSSNIQSEDIIAENYSSKMKLRPSKHHKILIELTNMKLTFSGYSYDEPTEDIADWSTDLLNSIDVEVKTFEIVDNVATSTWNKFLTELKEAHGGSPSMLALSISLVRPIDFLYATELIISAQVSPLRLHVDQDTLDFLIRFSEFKDARFDLIDDYPDIVYIQRFEVNSIDVKLDYKPKKVDYVGLKSGHTSELMNFFTLDGAKMTLKRVVLYGVDGLGELHNCLSSIWTPDITRSQLSGVLKGVTPLKSIITLGSGVKALVTVPLKEYRQDQRLTRSLQKGARDFLKTTSGELIRLGVRMASGTQAILENTEEFFGGQGARARCMSARLPEDELSPVPSACDEFDLFRSSIPRKQSPIVPIPSEEDDIEPLKAISLYADQPQNAQKGVKEAYGSLGKNLTIAYGAVRRAQRDARHSISAQDAATAFARATPIAFIRPMIGATEAVSKTLQGISNQMDRDQLVHMRDKYKQSSHYQRKRER.

It belongs to the ATG2 family.

The protein localises to the preautophagosomal structure membrane. Its subcellular location is the endoplasmic reticulum membrane. The enzyme catalyses a 1,2-diacyl-sn-glycero-3-phosphocholine(in) = a 1,2-diacyl-sn-glycero-3-phosphocholine(out). The catalysed reaction is a 1,2-diacyl-sn-glycero-3-phospho-L-serine(in) = a 1,2-diacyl-sn-glycero-3-phospho-L-serine(out). It carries out the reaction a 1,2-diacyl-sn-glycero-3-phosphoethanolamine(in) = a 1,2-diacyl-sn-glycero-3-phosphoethanolamine(out). Lipid transfer protein required for autophagosome completion and peroxisome degradation. Tethers the edge of the isolation membrane (IM) to the endoplasmic reticulum (ER) and mediates direct lipid transfer from ER to IM for IM expansion. ATG2 binds to the ER exit site (ERES), which is the membrane source for autophagosome formation, using basic residues in its N-terminal region (NR) and to the expanding edge of the IM through its C-terminal region. The latter binding is assisted by an ATG18-PtdIns3P interaction. ATG2 then extracts phospholipids from the membrane source using its NR and transfers them to ATG9 to the IM through its predicted beta-sheet-rich structure for membrane expansion. The chain is Autophagy-related protein 2 (ATG2) from Eremothecium gossypii (strain ATCC 10895 / CBS 109.51 / FGSC 9923 / NRRL Y-1056) (Yeast).